Reading from the N-terminus, the 702-residue chain is Arylphorin subunit alpha (702 aa).

The N-terminal stretch at M1 to S16 is a signal peptide. N75 and N214 each carry an N-linked (GlcNAc...) asparagine glycan.

Belongs to the hemocyanin family. As to quaternary structure, arylphorin is a hexamer of subunits alpha and beta. Fat body.

Its subcellular location is the secreted. The protein localises to the extracellular space. Its function is as follows. Arylphorin is a larval storage protein (LSP) which may serve as a storage protein used primarily as a source of aromatic amino acids for protein synthesis during metamorphosis. It is a constituent of the sclerotizing system of the cuticle, and serves as a carrier for ecdysteroid hormone. In Manduca sexta (Tobacco hawkmoth), this protein is Arylphorin subunit alpha.